The primary structure comprises 262 residues: MRIALGIEYDGRAFAGWQSQPHGNTVQDRLNRALGQIAGNRDVVTHAAGRTDAGVHAAMQVVHFDTDASRPLNAWVRGVNALLPPEVAVVWAREVGDDFHARFSAFSRSYSYFLLTHPVRSCLLAGKVGWYHQALDVAAMREAAAGLLGRHDFSSFRASECQAKSPVKDLQRLDIIEADGLLRFDLHADAFLHHMVRNIVGALLYVGKGALSPADMQSLLAARDRTSAPPTFMPDGLYLTGVGYPDEFSLPSRCEAARLRLR.

D52 serves as the catalytic Nucleophile. Position 110 (Y110) interacts with substrate.

The protein belongs to the tRNA pseudouridine synthase TruA family. As to quaternary structure, homodimer.

It carries out the reaction uridine(38/39/40) in tRNA = pseudouridine(38/39/40) in tRNA. Formation of pseudouridine at positions 38, 39 and 40 in the anticodon stem and loop of transfer RNAs. The sequence is that of tRNA pseudouridine synthase A from Chromobacterium violaceum (strain ATCC 12472 / DSM 30191 / JCM 1249 / CCUG 213 / NBRC 12614 / NCIMB 9131 / NCTC 9757 / MK).